The sequence spans 240 residues: Phosphoribosylaminoimidazole-succinocarboxamide synthase (240 aa).

This sequence belongs to the SAICAR synthetase family.

The enzyme catalyses 5-amino-1-(5-phospho-D-ribosyl)imidazole-4-carboxylate + L-aspartate + ATP = (2S)-2-[5-amino-1-(5-phospho-beta-D-ribosyl)imidazole-4-carboxamido]succinate + ADP + phosphate + 2 H(+). It participates in purine metabolism; IMP biosynthesis via de novo pathway; 5-amino-1-(5-phospho-D-ribosyl)imidazole-4-carboxamide from 5-amino-1-(5-phospho-D-ribosyl)imidazole-4-carboxylate: step 1/2. The sequence is that of Phosphoribosylaminoimidazole-succinocarboxamide synthase from Limosilactobacillus fermentum (strain NBRC 3956 / LMG 18251) (Lactobacillus fermentum).